A 172-amino-acid polypeptide reads, in one-letter code: Shikimate kinase (172 aa).

11-16 (GAGKST) is an ATP binding site. S15 is a binding site for Mg(2+). Substrate is bound by residues D33, R57, and G79. R117 is an ATP binding site. R136 is a binding site for substrate. An ATP-binding site is contributed by R153.

The protein belongs to the shikimate kinase family. As to quaternary structure, monomer. Mg(2+) is required as a cofactor.

The protein resides in the cytoplasm. It carries out the reaction shikimate + ATP = 3-phosphoshikimate + ADP + H(+). It participates in metabolic intermediate biosynthesis; chorismate biosynthesis; chorismate from D-erythrose 4-phosphate and phosphoenolpyruvate: step 5/7. Catalyzes the specific phosphorylation of the 3-hydroxyl group of shikimic acid using ATP as a cosubstrate. The protein is Shikimate kinase of Pseudomonas paraeruginosa (strain DSM 24068 / PA7) (Pseudomonas aeruginosa (strain PA7)).